A 608-amino-acid polypeptide reads, in one-letter code: uncharacterized protein (608 aa).

Positions 1–38 (MWLQQRLKVFPGLLSSSWARRVLAVSGFLVIIYWYIFS) are cleaved as a signal peptide. Residues 39-563 (GSLFRSFWYA…EEHMAKQYRG (525 aa)) lie on the Extracellular side of the membrane. N337 carries N-linked (GlcNAc...) asparagine glycosylation. Residues 564–584 (LPFLFWFSVASLITLFHLFLF) traverse the membrane as a helical segment. Over 585–608 (KLIYNEYCGPGAKPLFRSKEDTSV) the chain is Cytoplasmic.

It is found in the membrane. This is an uncharacterized protein from Xenopus tropicalis (Western clawed frog).